Here is a 491-residue protein sequence, read N- to C-terminus: Glutamyl-tRNA(Gln) amidotransferase subunit A (491 aa).

Residues Lys79 and Ser154 each act as charge relay system in the active site. Residue Ser178 is the Acyl-ester intermediate of the active site.

It belongs to the amidase family. GatA subfamily. In terms of assembly, heterotrimer of A, B and C subunits.

The catalysed reaction is L-glutamyl-tRNA(Gln) + L-glutamine + ATP + H2O = L-glutaminyl-tRNA(Gln) + L-glutamate + ADP + phosphate + H(+). Allows the formation of correctly charged Gln-tRNA(Gln) through the transamidation of misacylated Glu-tRNA(Gln) in organisms which lack glutaminyl-tRNA synthetase. The reaction takes place in the presence of glutamine and ATP through an activated gamma-phospho-Glu-tRNA(Gln). This chain is Glutamyl-tRNA(Gln) amidotransferase subunit A, found in Synechococcus sp. (strain CC9902).